Here is a 556-residue protein sequence, read N- to C-terminus: MSSSINGLNESEGSTPLSTASIIGSSEQLYMTHDERYLDVLQQYEVETENKRDFDLEEEQWGVLSGSCVDGTYWSAEEKELFFQAVARNGKRDLDLIAYSIPSKSAVQIERYINALENELRWLRNHVDASVRSQCLLKYEDIPIAMEMSQNWIDWEEKIAERLLEGSNISGVETSHYNAQSVKNKTSNEDLFDTNEMRKISERFYHFDRQAPFPSNPLSAGATEFLLQIIKSKLKELIGTSIFLAESRFRKLEANNAFHRKPIIKNRDVVLSGKFLRFHRFNIPGFWKYLPTRQKMNVYKRNKRLKFQNYIHIMESDERQSKLKLGRVRARKTKNNENTMFFDSKEHSTDESDGNLGEHDVKRKVDSVPADETSINGFKKSVNQAEYPDNAQMFMDESVAEESLVEIDDSVEAYDMIQSKNYESFVWKYVLHLTDEMSTEDALFETIPLSNLLAQKRMKDKLKGSDVFTTLKITSKSLHNIDEHSDSDDEVQPICYYYKDPVVSHAPGAAEVVSELESGYVGLISYDLSNLPNSTEDPERKLAKPVSSWELSLPLK.

In terms of assembly, component of the UAF (upstream activation factor) complex which consists of spp27/uaf30, rrn5, rrn10, and histones H3 and H4. Interacts with rrn10.

Its subcellular location is the nucleus. It localises to the nucleolus. In terms of biological role, component of the UAF (upstream activation factor) complex which interacts with the upstream element of the RNA polymerase I promoter and forms a stable preinitiation complex. UAF seems to stimulate basal transcription to a fully activated level. In Schizosaccharomyces pombe (strain 972 / ATCC 24843) (Fission yeast), this protein is RNA polymerase I-specific transcription initiation factor rrn5 (rrn5).